Here is a 141-residue protein sequence, read N- to C-terminus: Putative pre-16S rRNA nuclease (141 aa).

This sequence belongs to the YqgF nuclease family.

It localises to the cytoplasm. Its function is as follows. Could be a nuclease involved in processing of the 5'-end of pre-16S rRNA. The sequence is that of Putative pre-16S rRNA nuclease from Natranaerobius thermophilus (strain ATCC BAA-1301 / DSM 18059 / JW/NM-WN-LF).